A 486-amino-acid polypeptide reads, in one-letter code: Coronin-1B (486 aa).

Phosphoserine; by PKC is present on Ser-2. WD repeat units follow at residues 80 to 120 (GHTG…LTSP), 130 to 170 (GHTK…ELYR), 174 to 213 (LHPDLIYNVSWNRNGSLFCSACKDKSVRIIDPRRGTLVAE), 217 to 260 (AHEG…EPMA), and 265 to 305 (DSSN…PYIH). Positions 404-444 (LKVSRRNVLSDSRPTSAARPAAPAPAAPAPAAAASSSLSGA) are disordered. Low complexity predominate over residues 432-444 (APAAAASSSLSGA). Positions 446-484 (EAGKLEEVMRELRALRALVKEQGERIGRLEEQLGRVENG) form a coiled coil.

The protein belongs to the WD repeat coronin family. As to quaternary structure, forms homooligomers, but does not form complexes with the other coronins. Interacts with Arp2/3 complex components, including ACTR2, ARPC1B and ARPC2. Binds actin. In terms of processing, phosphorylated in vivo by PKC in response to cholinergic stimulation. Phosphorylation on Ser-2 regulates the interaction with the Arp2/3 complex and cell motility in fibroblasts. Phosphorylation does not seem to affect subcellular location.

It is found in the cytoplasm. Its subcellular location is the cytoskeleton. The protein localises to the stress fiber. Regulates leading edge dynamics and cell motility in fibroblasts. May be involved in cytokinesis and signal transduction. The sequence is that of Coronin-1B (CORO1B) from Oryctolagus cuniculus (Rabbit).